Reading from the N-terminus, the 133-residue chain is uncharacterized protein (133 aa).

Residues 91 to 113 (LFATALISCIPSSFSALSFLATL) form a helical membrane-spanning segment.

Its subcellular location is the membrane. This is an uncharacterized protein from Saccharomyces cerevisiae (strain ATCC 204508 / S288c) (Baker's yeast).